The following is a 311-amino-acid chain: tRNA dimethylallyltransferase (311 aa).

16–23 (GPTASGKS) provides a ligand contact to ATP. Residue 18-23 (TASGKS) participates in substrate binding. The segment at 41–44 (DSMQ) is interaction with substrate tRNA.

It belongs to the IPP transferase family. Monomer. Requires Mg(2+) as cofactor.

The catalysed reaction is adenosine(37) in tRNA + dimethylallyl diphosphate = N(6)-dimethylallyladenosine(37) in tRNA + diphosphate. Catalyzes the transfer of a dimethylallyl group onto the adenine at position 37 in tRNAs that read codons beginning with uridine, leading to the formation of N6-(dimethylallyl)adenosine (i(6)A). The chain is tRNA dimethylallyltransferase from Geobacter sulfurreducens (strain ATCC 51573 / DSM 12127 / PCA).